Reading from the N-terminus, the 106-residue chain is Large ribosomal subunit protein uL24 (106 aa).

This sequence belongs to the universal ribosomal protein uL24 family. As to quaternary structure, part of the 50S ribosomal subunit.

One of two assembly initiator proteins, it binds directly to the 5'-end of the 23S rRNA, where it nucleates assembly of the 50S subunit. Its function is as follows. One of the proteins that surrounds the polypeptide exit tunnel on the outside of the subunit. The protein is Large ribosomal subunit protein uL24 of Verminephrobacter eiseniae (strain EF01-2).